Here is a 366-residue protein sequence, read N- to C-terminus: Agamous-like MADS-box protein AGL36 (366 aa).

The MADS-box domain maps to Met1–Arg59. Residues Thr86–Met115 adopt a coiled-coil conformation.

Interacts with AGL62.

The protein resides in the nucleus. Functionally, probable transcription factor. The chain is Agamous-like MADS-box protein AGL36 (AGL36) from Arabidopsis thaliana (Mouse-ear cress).